The chain runs to 155 residues: Ubiquinone biosynthesis protein COQ4 homolog, mitochondrial (155 aa).

It belongs to the COQ4 family. As to quaternary structure, component of a multi-subunit COQ enzyme complex. Requires Zn(2+) as cofactor.

It is found in the mitochondrion inner membrane. The catalysed reaction is a 4-hydroxy-3-methoxy-5-(all-trans-polyprenyl)benzoate + H(+) = a 2-methoxy-6-(all-trans-polyprenyl)phenol + CO2. It participates in cofactor biosynthesis; ubiquinone biosynthesis. Functionally, lyase that catalyzes the C1-decarboxylation of 4-hydroxy-3-methoxy-5-(all-trans-polyprenyl)benzoic acid into 2-methoxy-6-(all-trans-polyprenyl)phenol during ubiquinone biosynthesis. The polypeptide is Ubiquinone biosynthesis protein COQ4 homolog, mitochondrial (Cryptosporidium hominis).